The sequence spans 299 residues: Nucleotide-binding protein Moth_0258 (299 aa).

14–21 (GLSGAGKT) contacts ATP. Position 68–71 (68–71 (DIRG)) interacts with GTP.

This sequence belongs to the RapZ-like family.

In terms of biological role, displays ATPase and GTPase activities. The protein is Nucleotide-binding protein Moth_0258 of Moorella thermoacetica (strain ATCC 39073 / JCM 9320).